A 235-amino-acid chain; its full sequence is MTAREKLIVGLDVPTVQQAEDIVSKIGDEVLFYKIGYQLVFAGGLEFARDLVQSGKKVFLDMKLLDIDNTVASGVENIARMGMSMLTLHAYPKAMRAAVKAAEGSGLCLLGVTVLTSMDDSDLVEAGYASDARSLVLRRAEQAREAGMGGIVCSAEESTAVREILGPDLAVVTPGIRPAGADLGDQKRVMTPYDAIKAGSSHLVVARPIVRAEDPKAAARAILDDMLRASFPANQ.

Substrate is bound by residues Asp-12, Lys-34, 61-70, Thr-116, Arg-177, Gln-186, and Arg-207; that span reads DMKLLDIDNT. Catalysis depends on Lys-63, which acts as the Proton donor.

It belongs to the OMP decarboxylase family. Type 1 subfamily. As to quaternary structure, homodimer.

It carries out the reaction orotidine 5'-phosphate + H(+) = UMP + CO2. Its pathway is pyrimidine metabolism; UMP biosynthesis via de novo pathway; UMP from orotate: step 2/2. Catalyzes the decarboxylation of orotidine 5'-monophosphate (OMP) to uridine 5'-monophosphate (UMP). This Agrobacterium fabrum (strain C58 / ATCC 33970) (Agrobacterium tumefaciens (strain C58)) protein is Orotidine 5'-phosphate decarboxylase.